Here is a 174-residue protein sequence, read N- to C-terminus: Large ribosomal subunit protein uL10 (174 aa).

Belongs to the universal ribosomal protein uL10 family. In terms of assembly, part of the ribosomal stalk of the 50S ribosomal subunit. The N-terminus interacts with L11 and the large rRNA to form the base of the stalk. The C-terminus forms an elongated spine to which L12 dimers bind in a sequential fashion forming a multimeric L10(L12)X complex.

Its function is as follows. Forms part of the ribosomal stalk, playing a central role in the interaction of the ribosome with GTP-bound translation factors. The protein is Large ribosomal subunit protein uL10 of Anaeromyxobacter sp. (strain Fw109-5).